The following is a 273-amino-acid chain: Dermonecrotic toxin LhSicTox-alphaIA2biv (273 aa).

The active site involves His-5. Positions 25 and 27 each coordinate Mg(2+). His-41 functions as the Nucleophile in the catalytic mechanism. 2 disulfides stabilise this stretch: Cys-45–Cys-51 and Cys-47–Cys-190. Asp-85 contributes to the Mg(2+) binding site.

It belongs to the arthropod phospholipase D family. Class II subfamily. The cofactor is Mg(2+). Expressed by the venom gland.

The protein localises to the secreted. It carries out the reaction an N-(acyl)-sphingosylphosphocholine = an N-(acyl)-sphingosyl-1,3-cyclic phosphate + choline. The catalysed reaction is an N-(acyl)-sphingosylphosphoethanolamine = an N-(acyl)-sphingosyl-1,3-cyclic phosphate + ethanolamine. It catalyses the reaction a 1-acyl-sn-glycero-3-phosphocholine = a 1-acyl-sn-glycero-2,3-cyclic phosphate + choline. The enzyme catalyses a 1-acyl-sn-glycero-3-phosphoethanolamine = a 1-acyl-sn-glycero-2,3-cyclic phosphate + ethanolamine. Dermonecrotic toxins cleave the phosphodiester linkage between the phosphate and headgroup of certain phospholipids (sphingolipid and lysolipid substrates), forming an alcohol (often choline) and a cyclic phosphate. This toxin acts on sphingomyelin (SM). It may also act on ceramide phosphoethanolamine (CPE), lysophosphatidylcholine (LPC) and lysophosphatidylethanolamine (LPE), but not on lysophosphatidylserine (LPS), and lysophosphatidylglycerol (LPG). It acts by transphosphatidylation, releasing exclusively cyclic phosphate products as second products. Induces dermonecrosis, hemolysis, increased vascular permeability, edema, inflammatory response, and platelet aggregation. The protein is Dermonecrotic toxin LhSicTox-alphaIA2biv of Loxosceles hirsuta (Recluse spider).